Consider the following 538-residue polypeptide: Calcium-dependent protein kinase 8 (538 aa).

Residues 1–26 (MGNCCGTPATAEEGGKRRRRGKQKKA) are disordered. G2 carries N-myristoyl glycine lipidation. The span at 16 to 25 (KRRRRGKQKK) shows a compositional bias: basic residues. The 259-residue stretch at 64–322 (YELGGELGRG…AEQVLEHPWL (259 aa)) folds into the Protein kinase domain. Residues 70–78 (LGRGEFGIT) and K93 contribute to the ATP site. The active-site Proton acceptor is D188. Positions 328–358 (MPDIPLGDAVRARLQQFAAMNKLKKKALKVI) are autoinhibitory domain. EF-hand domains lie at 365–400 (EEAA…LGNQ), 401–436 (MPDS…VRKI), 437–472 (GNDE…EIDG), and 473–508 (NDED…GTDW). Ca(2+)-binding residues include D378, S380, N382, Q384, D389, D414, D416, N418, E425, D450, N452, S454, Y456, E461, D486, D488, D490, K492, and E497.

The protein belongs to the protein kinase superfamily. Ser/Thr protein kinase family. CDPK subfamily.

Its subcellular location is the membrane. It catalyses the reaction L-seryl-[protein] + ATP = O-phospho-L-seryl-[protein] + ADP + H(+). It carries out the reaction L-threonyl-[protein] + ATP = O-phospho-L-threonyl-[protein] + ADP + H(+). With respect to regulation, activated by calcium. Autophosphorylation may play an important role in the regulation of the kinase activity. In terms of biological role, may play a role in signal transduction pathways that involve calcium as a second messenger. This is Calcium-dependent protein kinase 8 from Oryza sativa subsp. japonica (Rice).